The primary structure comprises 326 residues: Neuferricin homolog (326 aa).

An N-terminal signal peptide occupies residues 1–34; the sequence is MEKNRRKKDDAGVMTKTLAGVAALTFLVSFICSS. One can recognise a Cytochrome b5 heme-binding domain in the interval 98–197; that stretch reads KHVFTPEQLH…KEYPLVGVVA (100 aa).

This sequence belongs to the cytochrome b5 family. MAPR subfamily.

Its subcellular location is the secreted. Heme-binding protein. The chain is Neuferricin homolog from Caenorhabditis briggsae.